The following is a 146-amino-acid chain: Hemoglobin subunit beta (146 aa).

The Globin domain occupies P2–Y146. Heme b-binding residues include H63 and H92.

Belongs to the globin family. Heterotetramer of two alpha chains and two beta chains. When oxygenated in vitro, exists virtually only in polymeric form. When deoxygenated, forms tetramers, octamers and larger polymers. As to expression, red blood cells.

Involved in oxygen transport from the lung to the various peripheral tissues. This chain is Hemoglobin subunit beta, found in Paleosuchus palpebrosus (Cuvier's smooth-fronted caiman).